The primary structure comprises 359 residues: Aromatic amino acid aminotransferase (359 aa).

The disordered stretch occupies residues 1-42 (MSERKPPYLRSALDSIPPYRPGRKVVGPDGRSAKLSSNESPF). Residue K223 is modified to N6-(pyridoxal phosphate)lysine.

It belongs to the class-II pyridoxal-phosphate-dependent aminotransferase family. As to quaternary structure, homodimer. Requires pyridoxal 5'-phosphate as cofactor.

The enzyme catalyses an aromatic L-alpha-amino acid + 2-oxoglutarate = an aromatic oxo-acid + L-glutamate. Functionally, aminotransferase that catalyzes the conversion of aromatic amino acids and 2-oxoglutarate into corresponding aromatic oxo acids and L-glutamate. In Thermobifida fusca (strain YX), this protein is Aromatic amino acid aminotransferase.